The sequence spans 621 residues: Interleukin-1 receptor-associated kinase-like 2 (621 aa).

Residues 13 to 94 (LDDLCRNMDT…RAAQIILNWK (82 aa)) enclose the Death domain. The tract at residues 113–175 (GKPLAASVRN…TASADSKDFS (63 aa)) is disordered. A compositionally biased stretch (polar residues) spans 157-169 (ASSSLKTNQTASA). The Protein kinase domain occupies 206–476 (FNPSHKISEG…AEALVMAACL (271 aa)). Residues 212 to 220 (ISEGTFADV), K233, and 333 to 336 (KSSN) each bind ATP. Positions 503–522 (ETSLPCSGLSEGTGSSFNTP) are enriched in polar residues. The disordered stretch occupies residues 503-534 (ETSLPCSGLSEGTGSSFNTPEETDDVDNSSFD).

It belongs to the protein kinase superfamily. TKL Ser/Thr protein kinase family. Pelle subfamily. As to quaternary structure, interacts with MYD88. IL-1 stimulation leads to the formation of a signaling complex which dissociates from the IL-1 receptor following the binding of PELI1.

Binds to the IL-1 type I receptor following IL-1 engagement, triggering intracellular signaling cascades leading to transcriptional up-regulation and mRNA stabilization. This Bos taurus (Bovine) protein is Interleukin-1 receptor-associated kinase-like 2 (IRAK2).